We begin with the raw amino-acid sequence, 662 residues long: Bifunctional polymyxin resistance protein ArnA (662 aa).

The formyltransferase ArnAFT stretch occupies residues 1–307 (MTSKAVVFAY…ELGLVEGARL (307 aa)). The active-site Proton donor; for formyltransferase activity is the His106. Residues Arg116 and 138-142 (VERAD) contribute to the (6R)-10-formyltetrahydrofolate site. The dehydrogenase ArnADH stretch occupies residues 316–662 (RRTRVLILGV…EALREREAQA (347 aa)). Residues Asp349 and 370 to 371 (DI) contribute to the NAD(+) site. UDP-alpha-D-glucuronate contacts are provided by residues Ala395, Tyr400, and 434–435 (TS). Catalysis depends on Glu436, which acts as the Proton acceptor; for decarboxylase activity. UDP-alpha-D-glucuronate contacts are provided by residues Arg462, Asn493, 527–536 (RLVDGGAQKR), and Tyr614. Residue Arg620 is the Proton donor; for decarboxylase activity of the active site.

The protein in the N-terminal section; belongs to the Fmt family. UDP-L-Ara4N formyltransferase subfamily. This sequence in the C-terminal section; belongs to the NAD(P)-dependent epimerase/dehydratase family. UDP-glucuronic acid decarboxylase subfamily. In terms of assembly, homohexamer, formed by a dimer of trimers.

It catalyses the reaction UDP-alpha-D-glucuronate + NAD(+) = UDP-beta-L-threo-pentopyranos-4-ulose + CO2 + NADH. The enzyme catalyses UDP-4-amino-4-deoxy-beta-L-arabinose + (6R)-10-formyltetrahydrofolate = UDP-4-deoxy-4-formamido-beta-L-arabinose + (6S)-5,6,7,8-tetrahydrofolate + H(+). It functions in the pathway nucleotide-sugar biosynthesis; UDP-4-deoxy-4-formamido-beta-L-arabinose biosynthesis; UDP-4-deoxy-4-formamido-beta-L-arabinose from UDP-alpha-D-glucuronate: step 1/3. It participates in nucleotide-sugar biosynthesis; UDP-4-deoxy-4-formamido-beta-L-arabinose biosynthesis; UDP-4-deoxy-4-formamido-beta-L-arabinose from UDP-alpha-D-glucuronate: step 3/3. Its pathway is bacterial outer membrane biogenesis; lipopolysaccharide biosynthesis. Functionally, bifunctional enzyme that catalyzes the oxidative decarboxylation of UDP-glucuronic acid (UDP-GlcUA) to UDP-4-keto-arabinose (UDP-Ara4O) and the addition of a formyl group to UDP-4-amino-4-deoxy-L-arabinose (UDP-L-Ara4N) to form UDP-L-4-formamido-arabinose (UDP-L-Ara4FN). The modified arabinose is attached to lipid A and is required for resistance to polymyxin and cationic antimicrobial peptides. This chain is Bifunctional polymyxin resistance protein ArnA, found in Pseudomonas paraeruginosa (strain DSM 24068 / PA7) (Pseudomonas aeruginosa (strain PA7)).